We begin with the raw amino-acid sequence, 421 residues long: Serine--tRNA ligase (421 aa).

Position 231-233 (231-233 (TGE)) interacts with L-serine. Residue 262–264 (RRE) participates in ATP binding. An L-serine-binding site is contributed by glutamate 285. 349-352 (EVSS) is a binding site for ATP. Serine 384 is a binding site for L-serine.

This sequence belongs to the class-II aminoacyl-tRNA synthetase family. Type-1 seryl-tRNA synthetase subfamily. In terms of assembly, homodimer. The tRNA molecule binds across the dimer.

The protein resides in the cytoplasm. The catalysed reaction is tRNA(Ser) + L-serine + ATP = L-seryl-tRNA(Ser) + AMP + diphosphate + H(+). It carries out the reaction tRNA(Sec) + L-serine + ATP = L-seryl-tRNA(Sec) + AMP + diphosphate + H(+). It participates in aminoacyl-tRNA biosynthesis; selenocysteinyl-tRNA(Sec) biosynthesis; L-seryl-tRNA(Sec) from L-serine and tRNA(Sec): step 1/1. Its function is as follows. Catalyzes the attachment of serine to tRNA(Ser). Is also able to aminoacylate tRNA(Sec) with serine, to form the misacylated tRNA L-seryl-tRNA(Sec), which will be further converted into selenocysteinyl-tRNA(Sec). The protein is Serine--tRNA ligase of Methylacidiphilum infernorum (isolate V4) (Methylokorus infernorum (strain V4)).